Reading from the N-terminus, the 34-residue chain is Endoglucanase 1 (34 aa).

The enzyme catalyses Endohydrolysis of (1-&gt;4)-beta-D-glucosidic linkages in cellulose, lichenin and cereal beta-D-glucans.. In Sclerotinia sclerotiorum (White mold), this protein is Endoglucanase 1.